Consider the following 565-residue polypeptide: Receptor-like serine/threonine-protein kinase NCRK (565 aa).

The signal sequence occupies residues 1–23 (MKMRVETALAILLVLISIQQCYG). The Extracellular segment spans residues 24 to 103 (GVSNYTCTCF…SKKQYLSRKL (80 aa)). 5 N-linked (GlcNAc...) asparagine glycosylation sites follow: Asn-27, Asn-37, Asn-45, Asn-77, and Asn-85. The chain crosses the membrane as a helical span at residues 104-124 (VIVILLFCGVLISLAFLASMI). Topologically, residues 125–565 (CYICRKDKFS…PVLLEPSAHI (441 aa)) are cytoplasmic. The region spanning 210–495 (FSSNSVIGHG…REVVQILSTI (286 aa)) is the Protein kinase domain. Residues 216–224 (IGHGGSSCV) and Lys-238 contribute to the ATP site. The active-site Proton acceptor is the Asp-339. Phosphothreonine is present on residues Thr-378 and Thr-383. Tyr-391 is modified (phosphotyrosine).

The protein belongs to the protein kinase superfamily. Ser/Thr protein kinase family. Interacts with ARAC5. Phosphorylated. In terms of tissue distribution, mostly expressed in leaf primordia, root and shoot apical meristems, lateral root primordia, and stele of older roots and hypocotyls. In leaves and cotyledons, highest levels observed in trichomes, vasculatures, and hydathode endothem.

The protein resides in the cell membrane. It is found in the prevacuolar compartment membrane. The protein localises to the endosome. It catalyses the reaction L-seryl-[protein] + ATP = O-phospho-L-seryl-[protein] + ADP + H(+). The enzyme catalyses L-threonyl-[protein] + ATP = O-phospho-L-threonyl-[protein] + ADP + H(+). This chain is Receptor-like serine/threonine-protein kinase NCRK (NCRK), found in Arabidopsis thaliana (Mouse-ear cress).